A 469-amino-acid polypeptide reads, in one-letter code: Ufm1-specific protease 2 (469 aa).

An N-acetylmethionine modification is found at Met1. Residues Cys302, Asp426, and His428 contribute to the active site.

Belongs to the peptidase C78 family.

The protein resides in the endoplasmic reticulum. It is found in the cytoplasm. Its subcellular location is the nucleus. Its function is as follows. Thiol-dependent isopeptidase that specifically cleaves UFM1, a ubiquitin-like modifier protein, from conjugated proteins, such as CD274/PD-L1, CYB5R3, DDRGK1, MRE11, RPL26/uL24, TRIP4 and RPL26/uL24. While it is also able to mediate the processing of UFM1 precursors, a prerequisite for conjugation reactions, UFSP2 mainly acts as a protein deUFMylase that mediates deconjugation of UFM1 from target proteins. Mediates deUFMylation of RPL26/uL24, a critical step to release the UFM1 ribosome E3 ligase (UREL) complex during the recycling of 60S ribosome subunits from the endoplasmic reticulum. Catalyzes deUFMylation of TRIP4, regulating intracellular nuclear receptors transactivation and thereby regulate cell proliferation and differentiation. The chain is Ufm1-specific protease 2 from Pongo abelii (Sumatran orangutan).